Reading from the N-terminus, the 342-residue chain is Anthranilate phosphoribosyltransferase (342 aa).

5-phospho-alpha-D-ribose 1-diphosphate contacts are provided by residues glycine 83, 86–87, threonine 91, 93–96, 111–119, and serine 123; these read GD, NVST, and KHGNRSVSG. Residue glycine 83 coordinates anthranilate. Serine 95 is a binding site for Mg(2+). Asparagine 114 serves as a coordination point for anthranilate. Anthranilate is bound at residue arginine 169. Residues aspartate 228 and glutamate 229 each coordinate Mg(2+).

This sequence belongs to the anthranilate phosphoribosyltransferase family. As to quaternary structure, homodimer. It depends on Mg(2+) as a cofactor.

The enzyme catalyses N-(5-phospho-beta-D-ribosyl)anthranilate + diphosphate = 5-phospho-alpha-D-ribose 1-diphosphate + anthranilate. The protein operates within amino-acid biosynthesis; L-tryptophan biosynthesis; L-tryptophan from chorismate: step 2/5. Catalyzes the transfer of the phosphoribosyl group of 5-phosphorylribose-1-pyrophosphate (PRPP) to anthranilate to yield N-(5'-phosphoribosyl)-anthranilate (PRA). The protein is Anthranilate phosphoribosyltransferase of Halorhodospira halophila (strain DSM 244 / SL1) (Ectothiorhodospira halophila (strain DSM 244 / SL1)).